The primary structure comprises 289 residues: Shikimate dehydrogenase (NADP(+)) (289 aa).

Residues 22-24 (SRS) and Thr69 contribute to the shikimate site. Lys73 (proton acceptor) is an active-site residue. Glu85 contacts NADP(+). Positions 94 and 109 each coordinate shikimate. Residues 134–138 (GAGGA), 158–163 (NRTLSR), and Ile226 each bind NADP(+). Residue Tyr228 coordinates shikimate. Gly249 lines the NADP(+) pocket.

The protein belongs to the shikimate dehydrogenase family. In terms of assembly, homodimer.

The catalysed reaction is shikimate + NADP(+) = 3-dehydroshikimate + NADPH + H(+). It functions in the pathway metabolic intermediate biosynthesis; chorismate biosynthesis; chorismate from D-erythrose 4-phosphate and phosphoenolpyruvate: step 4/7. In terms of biological role, involved in the biosynthesis of the chorismate, which leads to the biosynthesis of aromatic amino acids. Catalyzes the reversible NADPH linked reduction of 3-dehydroshikimate (DHSA) to yield shikimate (SA). The sequence is that of Shikimate dehydrogenase (NADP(+)) from Brucella canis (strain ATCC 23365 / NCTC 10854 / RM-666).